We begin with the raw amino-acid sequence, 148 residues long: Augurin (148 aa).

The N-terminal stretch at 1–31 (MSTSSARPAVLALAGLALLLLLCLGPDGISG) is a signal peptide. Propeptides lie at residues 32-70 (NKLK…RAKR) and 133-148 (SRES…YNDY).

Belongs to the augurin family. As to expression, expressed in the intermediate lobe of pituitary, glomerular layer of adrenal cortex, choroid plexus and atrioventricular node of the heart. Expressed in the brain with high expression in the choroid plexus and the epithelial lining of the central canal and expression in the gray matter of the spinal cord (at protein level).

It is found in the secreted. Its subcellular location is the cytoplasm. It localises to the apical cell membrane. In terms of biological role, probable hormone that may attenuate cell proliferation and induce senescence of oligodendrocyte and neural precursor cells in the central nervous system. ECRG4-induced senescence is characterized by G1 arrest, RB1 dephosphorylation and accelerated CCND1 and CCND3 proteasomal degradation. This is Augurin from Mus musculus (Mouse).